The chain runs to 114 residues: Small ribosomal subunit protein uS17 (114 aa).

This sequence belongs to the universal ribosomal protein uS17 family. In terms of assembly, part of the 30S ribosomal subunit.

Its function is as follows. One of the primary rRNA binding proteins, it binds specifically to the 5'-end of 16S ribosomal RNA. In Saccharolobus solfataricus (strain ATCC 35092 / DSM 1617 / JCM 11322 / P2) (Sulfolobus solfataricus), this protein is Small ribosomal subunit protein uS17.